The following is a 359-amino-acid chain: Dual-specificity RNA methyltransferase RlmN (359 aa).

Glu-90 serves as the catalytic Proton acceptor. Residues 109–342 (HQERYTVCIS…CTIRESKGLD (234 aa)) enclose the Radical SAM core domain. An intrachain disulfide couples Cys-116 to Cys-347. Residues Cys-123, Cys-127, and Cys-130 each coordinate [4Fe-4S] cluster. S-adenosyl-L-methionine is bound by residues 173 to 174 (GE), Ser-205, 228 to 230 (SLH), and Asn-304. Cys-347 functions as the S-methylcysteine intermediate in the catalytic mechanism.

The protein belongs to the radical SAM superfamily. RlmN family. Requires [4Fe-4S] cluster as cofactor.

The protein localises to the cytoplasm. The catalysed reaction is adenosine(2503) in 23S rRNA + 2 reduced [2Fe-2S]-[ferredoxin] + 2 S-adenosyl-L-methionine = 2-methyladenosine(2503) in 23S rRNA + 5'-deoxyadenosine + L-methionine + 2 oxidized [2Fe-2S]-[ferredoxin] + S-adenosyl-L-homocysteine. The enzyme catalyses adenosine(37) in tRNA + 2 reduced [2Fe-2S]-[ferredoxin] + 2 S-adenosyl-L-methionine = 2-methyladenosine(37) in tRNA + 5'-deoxyadenosine + L-methionine + 2 oxidized [2Fe-2S]-[ferredoxin] + S-adenosyl-L-homocysteine. Specifically methylates position 2 of adenine 2503 in 23S rRNA and position 2 of adenine 37 in tRNAs. m2A2503 modification seems to play a crucial role in the proofreading step occurring at the peptidyl transferase center and thus would serve to optimize ribosomal fidelity. In Sulfurovum sp. (strain NBC37-1), this protein is Dual-specificity RNA methyltransferase RlmN.